Here is a 351-residue protein sequence, read N- to C-terminus: Peptide chain release factor 1 (351 aa).

An N5-methylglutamine modification is found at Gln229. Residues 278 to 297 (RVDDERSADRAAQVGSGDRS) form a disordered region.

Belongs to the prokaryotic/mitochondrial release factor family. In terms of processing, methylated by PrmC. Methylation increases the termination efficiency of RF1.

Its subcellular location is the cytoplasm. Functionally, peptide chain release factor 1 directs the termination of translation in response to the peptide chain termination codons UAG and UAA. This is Peptide chain release factor 1 from Roseobacter denitrificans (strain ATCC 33942 / OCh 114) (Erythrobacter sp. (strain OCh 114)).